The primary structure comprises 197 residues: Probable nicotinate-nucleotide adenylyltransferase (197 aa).

Belongs to the NadD family.

The enzyme catalyses nicotinate beta-D-ribonucleotide + ATP + H(+) = deamido-NAD(+) + diphosphate. Its pathway is cofactor biosynthesis; NAD(+) biosynthesis; deamido-NAD(+) from nicotinate D-ribonucleotide: step 1/1. Its function is as follows. Catalyzes the reversible adenylation of nicotinate mononucleotide (NaMN) to nicotinic acid adenine dinucleotide (NaAD). The chain is Probable nicotinate-nucleotide adenylyltransferase from Bordetella avium (strain 197N).